The primary structure comprises 109 residues: Ribonuclease P protein component (109 aa).

It belongs to the RnpA family. In terms of assembly, consists of a catalytic RNA component (M1 or rnpB) and a protein subunit.

The enzyme catalyses Endonucleolytic cleavage of RNA, removing 5'-extranucleotides from tRNA precursor.. Functionally, RNaseP catalyzes the removal of the 5'-leader sequence from pre-tRNA to produce the mature 5'-terminus. It can also cleave other RNA substrates such as 4.5S RNA. The protein component plays an auxiliary but essential role in vivo by binding to the 5'-leader sequence and broadening the substrate specificity of the ribozyme. This is Ribonuclease P protein component from Nitratiruptor sp. (strain SB155-2).